A 262-amino-acid chain; its full sequence is Thiazole synthase (262 aa).

Lysine 105 serves as the catalytic Schiff-base intermediate with DXP. Residues glycine 166, 192 to 193 (AG), and 214 to 215 (NT) contribute to the 1-deoxy-D-xylulose 5-phosphate site.

This sequence belongs to the ThiG family. As to quaternary structure, homotetramer. Forms heterodimers with either ThiH or ThiS.

Its subcellular location is the cytoplasm. It catalyses the reaction [ThiS sulfur-carrier protein]-C-terminal-Gly-aminoethanethioate + 2-iminoacetate + 1-deoxy-D-xylulose 5-phosphate = [ThiS sulfur-carrier protein]-C-terminal Gly-Gly + 2-[(2R,5Z)-2-carboxy-4-methylthiazol-5(2H)-ylidene]ethyl phosphate + 2 H2O + H(+). It participates in cofactor biosynthesis; thiamine diphosphate biosynthesis. Its function is as follows. Catalyzes the rearrangement of 1-deoxy-D-xylulose 5-phosphate (DXP) to produce the thiazole phosphate moiety of thiamine. Sulfur is provided by the thiocarboxylate moiety of the carrier protein ThiS. In vitro, sulfur can be provided by H(2)S. The chain is Thiazole synthase from Phenylobacterium zucineum (strain HLK1).